The sequence spans 597 residues: Gamma-terpinene synthase, chloroplastic (597 aa).

The N-terminal 47 residues, 1-47 (MATLSMQVSILSKQVKNLNSFGMRASKLPMVARRVDVSTTRLRPICS), are a transit peptide targeting the chloroplast. Mn(2+)-binding residues include D350 and D354. The DDXXD motif motif lies at 350 to 354 (DDVYD). 2 homodimerization regions span residues 356–362 (YGTLDEL) and 428–464 (EAKW…YFTL). Mn(2+)-binding residues include D494 and E502.

The protein belongs to the terpene synthase family. As to quaternary structure, homodimer. Mn(2+) is required as a cofactor. It depends on Mg(2+) as a cofactor.

The protein localises to the plastid. Its subcellular location is the chloroplast. The enzyme catalyses (2E)-geranyl diphosphate = gamma-terpinene + diphosphate. It participates in secondary metabolite biosynthesis; terpenoid biosynthesis. Its function is as follows. Involved in the biosynthesis of phenolic monoterpenes natural products thymol and carvacrol which have a broad range of biological activities acting as antimicrobial compounds, insecticides, antioxidants and pharmaceutical agents. Monoterpene synthase which catalyzes the conversion of geranyl diphosphate (GPP) to gamma-terpinene. The sequence is that of Gamma-terpinene synthase, chloroplastic from Thymus caespititius (Cretan thyme).